The chain runs to 460 residues: A-type ATP synthase subunit B (460 aa).

It belongs to the ATPase alpha/beta chains family. In terms of assembly, has multiple subunits with at least A(3), B(3), C, D, E, F, H, I and proteolipid K(x).

It is found in the cell membrane. Component of the A-type ATP synthase that produces ATP from ADP in the presence of a proton gradient across the membrane. The B chain is a regulatory subunit. The sequence is that of A-type ATP synthase subunit B from Methanosarcina barkeri (strain Fusaro / DSM 804).